Here is a 209-residue protein sequence, read N- to C-terminus: Small ribosomal subunit protein uS4 (209 aa).

The 66-residue stretch at 99 to 164 (GRLDSVVYRM…QLRVKAALEA (66 aa)) folds into the S4 RNA-binding domain.

It belongs to the universal ribosomal protein uS4 family. As to quaternary structure, part of the 30S ribosomal subunit. Contacts protein S5. The interaction surface between S4 and S5 is involved in control of translational fidelity.

In terms of biological role, one of the primary rRNA binding proteins, it binds directly to 16S rRNA where it nucleates assembly of the body of the 30S subunit. Functionally, with S5 and S12 plays an important role in translational accuracy. The sequence is that of Small ribosomal subunit protein uS4 from Aromatoleum aromaticum (strain DSM 19018 / LMG 30748 / EbN1) (Azoarcus sp. (strain EbN1)).